The chain runs to 271 residues: Formamidopyrimidine-DNA glycosylase (271 aa).

Pro-2 serves as the catalytic Schiff-base intermediate with DNA. The Proton donor role is filled by Glu-3. The active-site Proton donor; for beta-elimination activity is the Lys-58. Positions 92, 111, and 152 each coordinate DNA. Residues 237–271 (MVYGREGEACRHCGGELKHATIGQRATVWCAACQR) form an FPG-type zinc finger. Arg-261 functions as the Proton donor; for delta-elimination activity in the catalytic mechanism.

The protein belongs to the FPG family. In terms of assembly, monomer. Requires Zn(2+) as cofactor.

The enzyme catalyses Hydrolysis of DNA containing ring-opened 7-methylguanine residues, releasing 2,6-diamino-4-hydroxy-5-(N-methyl)formamidopyrimidine.. It catalyses the reaction 2'-deoxyribonucleotide-(2'-deoxyribose 5'-phosphate)-2'-deoxyribonucleotide-DNA = a 3'-end 2'-deoxyribonucleotide-(2,3-dehydro-2,3-deoxyribose 5'-phosphate)-DNA + a 5'-end 5'-phospho-2'-deoxyribonucleoside-DNA + H(+). In terms of biological role, involved in base excision repair of DNA damaged by oxidation or by mutagenic agents. Acts as a DNA glycosylase that recognizes and removes damaged bases. Has a preference for oxidized purines, such as 7,8-dihydro-8-oxoguanine (8-oxoG). Has AP (apurinic/apyrimidinic) lyase activity and introduces nicks in the DNA strand. Cleaves the DNA backbone by beta-delta elimination to generate a single-strand break at the site of the removed base with both 3'- and 5'-phosphates. The sequence is that of Formamidopyrimidine-DNA glycosylase from Xanthomonas campestris pv. campestris (strain ATCC 33913 / DSM 3586 / NCPPB 528 / LMG 568 / P 25).